A 393-amino-acid polypeptide reads, in one-letter code: Diphosphomevalonate decarboxylase (393 aa).

(R)-5-diphosphomevalonate is bound by residues 21-24, Arg77, 156-161, and Thr212; these read YWGK and SGSACR.

This sequence belongs to the diphosphomevalonate decarboxylase family. In terms of assembly, homodimer.

The protein localises to the cytoplasm. It localises to the nucleus. The catalysed reaction is (R)-5-diphosphomevalonate + ATP = isopentenyl diphosphate + ADP + phosphate + CO2. It functions in the pathway isoprenoid biosynthesis; isopentenyl diphosphate biosynthesis via mevalonate pathway; isopentenyl diphosphate from (R)-mevalonate: step 3/3. In terms of biological role, diphosphomevalonate decarboxylase; part of the second module of ergosterol biosynthesis pathway that includes the middle steps of the pathway. Mvd1 converts diphosphomevalonate into isopentenyl diphosphate. The second module is carried out in the vacuole and involves the formation of farnesyl diphosphate, which is also an important intermediate in the biosynthesis of ubiquinone, dolichol, heme and prenylated proteins. Activity by the mevalonate kinase erg12 first converts mevalonate into 5-phosphomevalonate. 5-phosphomevalonate is then further converted to 5-diphosphomevalonate by the phosphomevalonate kinase erg8. The diphosphomevalonate decarboxylase mvd1 then produces isopentenyl diphosphate. The isopentenyl-diphosphate delta-isomerase idi1 then catalyzes the 1,3-allylic rearrangement of the homoallylic substrate isopentenyl (IPP) to its highly electrophilic allylic isomer, dimethylallyl diphosphate (DMAPP). Finally the farnesyl diphosphate synthase fps1 catalyzes the sequential condensation of isopentenyl pyrophosphate with dimethylallyl pyrophosphate, and then with the resultant geranylpyrophosphate to the ultimate product farnesyl pyrophosphate. This Schizosaccharomyces pombe (strain 972 / ATCC 24843) (Fission yeast) protein is Diphosphomevalonate decarboxylase (mvd1).